The chain runs to 360 residues: UPF0283 membrane protein Asuc_0957 (360 aa).

Helical transmembrane passes span 74-94 (VIAVAVLFLGATVAQSVQWLI), 102-122 (WIYFAFAVVGCSVVGLGLSAL), and 215-235 (AVENGIVVAISPLAIVDMLFL).

This sequence belongs to the UPF0283 family.

The protein resides in the cell inner membrane. The polypeptide is UPF0283 membrane protein Asuc_0957 (Actinobacillus succinogenes (strain ATCC 55618 / DSM 22257 / CCUG 43843 / 130Z)).